We begin with the raw amino-acid sequence, 227 residues long: 2-C-methyl-D-erythritol 4-phosphate cytidylyltransferase (227 aa).

The protein belongs to the IspD/TarI cytidylyltransferase family. IspD subfamily.

The enzyme catalyses 2-C-methyl-D-erythritol 4-phosphate + CTP + H(+) = 4-CDP-2-C-methyl-D-erythritol + diphosphate. Its pathway is isoprenoid biosynthesis; isopentenyl diphosphate biosynthesis via DXP pathway; isopentenyl diphosphate from 1-deoxy-D-xylulose 5-phosphate: step 2/6. Catalyzes the formation of 4-diphosphocytidyl-2-C-methyl-D-erythritol from CTP and 2-C-methyl-D-erythritol 4-phosphate (MEP). The polypeptide is 2-C-methyl-D-erythritol 4-phosphate cytidylyltransferase (Dehalococcoides mccartyi (strain CBDB1)).